A 309-amino-acid polypeptide reads, in one-letter code: NAD kinase (309 aa).

Asp89 (proton acceptor) is an active-site residue. Residues 89–90 (DG), 163–164 (NE), His174, Arg191, Asp193, and 204–209 (TAYSLS) contribute to the NAD(+) site.

The protein belongs to the NAD kinase family. Requires a divalent metal cation as cofactor.

It localises to the cytoplasm. It carries out the reaction NAD(+) + ATP = ADP + NADP(+) + H(+). Functionally, involved in the regulation of the intracellular balance of NAD and NADP, and is a key enzyme in the biosynthesis of NADP. Catalyzes specifically the phosphorylation on 2'-hydroxyl of the adenosine moiety of NAD to yield NADP. This chain is NAD kinase, found in Shewanella denitrificans (strain OS217 / ATCC BAA-1090 / DSM 15013).